The chain runs to 348 residues: Spore development regulator vosA (348 aa).

A Velvet domain is found at 46-244; the sequence is ALSPSSCFLS…SDQGVRLRLR (199 aa). A disordered region spans residues 250 to 294; it reads MMSNKRSISGSGDLTSDQSQQQQQQQPLAKKRREDSVESANPSSL. Residues 253–266 are compositionally biased toward polar residues; the sequence is NKRSISGSGDLTSD. A Nuclear localization signal motif is present at residues 274 to 280; that stretch reads QQPLAKK.

Belongs to the velvet family. VosA subfamily. Forms a heterodimeric complex with VEL2; the formation of the VEL2-VOS1 complex is light-dependent.

Its subcellular location is the nucleus. Component of the velB-VosA heterodimeric complex that plays a dual role in activating genes associated with spore maturation and repressing certain development-associated genes. The complex binds DNA through the DNA-binding domain of vosA that recognizes an 11-nucleotide consensus sequence 5'-CTGGCCGCGGC-3' consisting of two motifs in the promoters of key developmental regulatory genes. Regulates spore viability, trehalose accumulation, and tolerance to thermal and oxidative as well as ion stresses. Positively regulates conidial pigmentation and pathogenicity on barley. In Cochliobolus sativus (strain ND90Pr / ATCC 201652) (Common root rot and spot blotch fungus), this protein is Spore development regulator vosA.